The sequence spans 210 residues: Coatomer subunit zeta-2 (210 aa).

A compositionally biased stretch (basic and acidic residues) spans Met-1–Pro-12. Positions Met-1 to Ser-34 are disordered. Residues Gly-13 to Ser-34 are compositionally biased toward low complexity.

This sequence belongs to the adaptor complexes small subunit family. In terms of assembly, oligomeric complex.

The protein resides in the cytoplasm. The protein localises to the endoplasmic reticulum-Golgi intermediate compartment membrane. Its subcellular location is the golgi apparatus membrane. It localises to the cytoplasmic vesicle. It is found in the COPI-coated vesicle membrane. Functionally, the coatomer is a cytosolic protein complex that binds to dilysine motifs and reversibly associates with Golgi non-clathrin-coated vesicles, which further mediate biosynthetic protein transport from the ER, via the Golgi up to the trans Golgi network. Coatomer complex is required for budding from Golgi membranes, and is essential for the retrograde Golgi-to-ER transport of dilysine-tagged proteins. The zeta subunit may be involved in regulating the coat assembly and, hence, the rate of biosynthetic protein transport due to its association-dissociation properties with the coatomer complex. This chain is Coatomer subunit zeta-2 (COPZ2), found in Homo sapiens (Human).